The primary structure comprises 1273 residues: DNA-directed RNA polymerase subunit beta (1273 aa).

This sequence belongs to the RNA polymerase beta chain family. As to quaternary structure, the RNAP catalytic core consists of 2 alpha, 1 beta, 1 beta' and 1 omega subunit. When a sigma factor is associated with the core the holoenzyme is formed, which can initiate transcription.

It carries out the reaction RNA(n) + a ribonucleoside 5'-triphosphate = RNA(n+1) + diphosphate. In terms of biological role, DNA-dependent RNA polymerase catalyzes the transcription of DNA into RNA using the four ribonucleoside triphosphates as substrates. The chain is DNA-directed RNA polymerase subunit beta from Phytoplasma mali (strain AT).